Consider the following 386-residue polypeptide: Antilisterial bacteriocin subtilosin biosynthesis protein AlbE (386 aa).

Its function is as follows. Involved in the production of the bacteriocin subtilosin. The chain is Antilisterial bacteriocin subtilosin biosynthesis protein AlbE (albE) from Bacillus subtilis.